We begin with the raw amino-acid sequence, 57 residues long: COP9 signalosome complex subunit 9 (57 aa).

The protein belongs to the CSN9 family. Component of the CSN complex, probably composed of cops1, cops2, cops3, cops4, cops5, cops6, cops7, cops8 and cops9.

It localises to the nucleus. The protein localises to the cytoplasm. It is found in the nucleoplasm. In terms of biological role, component of the COP9 signalosome complex (CSN), a complex involved in various cellular and developmental processes. The CSN complex is an essential regulator of the ubiquitin (Ubl) conjugation pathway by mediating the deneddylation of the cullin subunits of SCF-type E3 ligase complexes, leading to decrease the Ubl ligase activity. May play a role in cell proliferation. This Xenopus tropicalis (Western clawed frog) protein is COP9 signalosome complex subunit 9.